The sequence spans 458 residues: Protein amnionless (458 aa).

A signal peptide spans Met1–Ala19. Residues Ala20–Ala366 are Extracellular-facing. N-linked (GlcNAc...) asparagine glycosylation is present at Asn35. Disulfide bonds link Cys43/Cys96, Cys137/Cys213, Cys205/Cys211, Cys223/Cys249, Cys234/Cys250, and Cys239/Cys253. The segment at Ser67–Ala87 is interaction with CUBN. The VWFC domain maps to Gly203 to Gly254. The helical transmembrane segment at Gly367–Leu387 threads the bilayer. Residues Arg388–Ala458 are Cytoplasmic-facing. The disordered stretch occupies residues Ser422–Ser446.

As to quaternary structure, interacts (via extracellular region) with CUBN/cubilin. This gives rise to a huge complex containing one AMN chain and three CUBN chains. Post-translationally, N-glycosylated. A soluble form arises by proteolytic removal of the membrane anchor. Detected in kidney (at protein level). Detected in kidney and ileum.

The protein localises to the apical cell membrane. It localises to the cell membrane. It is found in the endosome membrane. The protein resides in the membrane. Its subcellular location is the coated pit. The protein localises to the secreted. Membrane-bound component of the endocytic receptor formed by AMN and CUBN. Required for normal CUBN glycosylation and trafficking to the cell surface. The complex formed by AMN and CUBN is required for efficient absorption of vitamin B12. Required for normal CUBN-mediated protein transport in the kidney. This chain is Protein amnionless (AMN), found in Canis lupus familiaris (Dog).